A 557-amino-acid polypeptide reads, in one-letter code: Hepatocyte nuclear factor 1-beta (557 aa).

The segment at 1–31 is dimerization; that stretch reads MVSKLTSLQQELLSALLSSGVTKEVLIQALE. An HNF-p1 domain is found at 1-32; it reads MVSKLTSLQQELLSALLSSGVTKEVLIQALEE. Ser49, Ser52, Ser75, and Ser80 each carry phosphoserine. The tract at residues 66–85 is disordered; that stretch reads TNGHAKGRLSGDEGSEDGDD. Positions 93–188 constitute a POU-specific atypical domain; it reads KELQALNTEE…ILRQFNQTVQ (96 aa). A DNA-binding region (homeobox; HNF1-type) is located at residues 231 to 311; the sequence is MRRNRFKWGP…NRRKEEAFRQ (81 aa). The tract at residues 324 to 370 is disordered; it reads HNLNPLLTHGSPHHQPSSSPPNKLSGVRYSQPGNNEVTSSSTISHHG. The span at 354–370 shows a compositional bias: polar residues; that stretch reads QPGNNEVTSSSTISHHG.

The protein belongs to the HNF1 homeobox family. Binds DNA as a dimer. Can form homodimer or heterodimer with HNF1-alpha. Interacts (via HNF-p1 domain) with PCBD1; the interaction increases its transactivation activity. As to expression, liver, kidney and intestine.

It localises to the nucleus. Functionally, transcription factor that binds to the inverted palindrome 5'-GTTAATNATTAAC-3'. Binds to the FPC element in the cAMP regulatory unit of the PLAU gene. Transcriptional activity is increased by coactivator PCBD1. This chain is Hepatocyte nuclear factor 1-beta (Hnf1b), found in Rattus norvegicus (Rat).